The following is a 603-amino-acid chain: Myotubularin (603 aa).

Residues 1–13 are compositionally biased toward polar residues; that stretch reads MASAPTSKYNSHS. A disordered region spans residues 1–32; sequence MASAPTSKYNSHSLENESIKRTSRDGVNRDVG. Phosphoserine occurs at positions 13 and 18. Residues 14–32 show a composition bias toward basic and acidic residues; it reads LENESIKRTSRDGVNRDVG. Positions 29–97 constitute a GRAM domain; that stretch reads RDVGETLPRL…GVISRIEKMG (69 aa). The Myotubularin phosphatase domain occupies 163-538; sequence GWTVYNPVEE…RHLELWVNYY (376 aa). Residues N288, N313, and I314 each contribute to the a 1,2-diacyl-sn-glycero-3-phospho-(1D-myo-inositol-3,5-bisphosphate) site. 3 residues coordinate a 1,2-diacyl-sn-glycero-3-phospho-(1D-myo-inositol-3-phosphate): N288, N313, and I314. C375 (phosphocysteine intermediate) is an active-site residue. Residues S376, D377, G378, W379, D380, R381, K417, and R421 each coordinate a 1,2-diacyl-sn-glycero-3-phospho-(1D-myo-inositol-3,5-bisphosphate). A 1,2-diacyl-sn-glycero-3-phospho-(1D-myo-inositol-3-phosphate)-binding residues include S376, D377, G378, W379, D380, and R381. R421 contributes to the a 1,2-diacyl-sn-glycero-3-phospho-(1D-myo-inositol-3-phosphate) binding site. A Phosphothreonine modification is found at T495. The segment at 580 to 603 is disordered; sequence AKLSDPSASPSSPSQMMPHVQTHF. Low complexity predominate over residues 583-593; the sequence is SDPSASPSSPS. S588 is subject to Phosphoserine.

The protein belongs to the protein-tyrosine phosphatase family. Non-receptor class myotubularin subfamily. In terms of assembly, heterodimer with MTMR12. Interacts with KMT2A/MLL1 (via SET domain). Interacts with DES in skeletal muscle but not in cardiac muscle. Interacts with SPEG.

It is found in the cytoplasm. It localises to the cell membrane. The protein localises to the cell projection. Its subcellular location is the filopodium. The protein resides in the ruffle. It is found in the late endosome. It localises to the myofibril. The protein localises to the sarcomere. It catalyses the reaction a 1,2-diacyl-sn-glycero-3-phospho-(1D-myo-inositol-3-phosphate) + H2O = a 1,2-diacyl-sn-glycero-3-phospho-(1D-myo-inositol) + phosphate. It carries out the reaction a 1,2-diacyl-sn-glycero-3-phospho-(1D-myo-inositol-3,5-bisphosphate) + H2O = a 1,2-diacyl-sn-glycero-3-phospho-(1D-myo-inositol-5-phosphate) + phosphate. The catalysed reaction is 1,2-dioctanoyl-sn-glycero-3-phospho-(1-D-myo-inositol-3-phosphate) + H2O = 1,2-dioctanoyl-sn-glycero-3-phospho-(1D-myo-inositol) + phosphate. The enzyme catalyses 1,2-dioctanoyl-sn-glycero-3-phospho-(1D-myo-inositol-3,5-bisphosphate) + H2O = 1,2-dioctanoyl-sn-glycero-3-phospho-(1D-myo-inositol-5-phosphate) + phosphate. It catalyses the reaction 1,2-dihexadecanoyl-sn-glycero-3-phospho-(1D-myo-inositol-3,5-phosphate) + H2O = 1,2-dihexadecanoyl-sn-glycero-3-phospho-(1D-myo-inositol-5-phosphate) + phosphate. Its activity is regulated as follows. Allosterically activated by phosphatidylinositol 5-phosphate (PI5P). In terms of biological role, lipid phosphatase which dephosphorylates phosphatidylinositol 3-monophosphate (PI3P) and phosphatidylinositol 3,5-bisphosphate (PI(3,5)P2). Has also been shown to dephosphorylate phosphotyrosine- and phosphoserine-containing peptides. Negatively regulates EGFR degradation through regulation of EGFR trafficking from the late endosome to the lysosome. Plays a role in vacuolar formation and morphology. Regulates desmin intermediate filament assembly and architecture. Plays a role in mitochondrial morphology and positioning. Required for skeletal muscle maintenance but not for myogenesis. In skeletal muscles, stabilizes MTMR12 protein levels. The sequence is that of Myotubularin from Bos taurus (Bovine).